We begin with the raw amino-acid sequence, 883 residues long: Copper-transporting ATPase PAA2, chloroplastic (883 aa).

The transit peptide at 1-65 (MASNLLRFPL…TQSFESTESS (65 aa)) directs the protein to the chloroplast. The 71-residue stretch at 76–146 (TPILLDVSGM…RLTESGFEAK (71 aa)) folds into the HMA domain. Residues cysteine 87 and cysteine 90 each coordinate Cu cation. The next 6 membrane-spanning stretches (helical) occupy residues 179-199 (VAFAWTLVALCCGSHTSHILH), 209-229 (GIWDLLHNSYVKGGLAVGALL), 250-270 (MNSLVGLGSMAAFSISLISLV), 274-294 (LEWDASFFDEPVMLLGFVLLG), 445-465 (AIAGPFVYTIMSLSAMTFAFW), and 499-519 (VLVVSCPCALGLATPTAILIG). The 4-aspartylphosphate intermediate role is filled by aspartate 548. Residue 761-768 (GDGINDAP) coordinates ATP. Residues aspartate 762 and aspartate 766 each contribute to the Mg(2+) site. 2 helical membrane-spanning segments follow: residues 822–842 (LAWAIAYNVISIPIAAGVLLP) and 846–866 (FAMTPSLSGGLMALSSIFVVS).

This sequence belongs to the cation transport ATPase (P-type) (TC 3.A.3) family. Type IB subfamily. As to expression, expressed in the shoots only and not in the roots.

The protein localises to the plastid. Its subcellular location is the chloroplast thylakoid membrane. It carries out the reaction Cu(2+)(in) + ATP + H2O = Cu(2+)(out) + ADP + phosphate + H(+). Mediates copper transfer across the chloroplast thylakoid membrane. Required for copper delivery into the thylakoids lumen, which is essential for the function of copper proteins. The polypeptide is Copper-transporting ATPase PAA2, chloroplastic (PAA2) (Arabidopsis thaliana (Mouse-ear cress)).